Consider the following 660-residue polypeptide: Bifunctional polymyxin resistance protein ArnA (660 aa).

A formyltransferase ArnAFT region spans residues 1–304 (MKAIVFAYHD…EMGIVTDVRL (304 aa)). His104 functions as the Proton donor; for formyltransferase activity in the catalytic mechanism. Residues Arg114 and 136–140 (VKRPD) each bind (6R)-10-formyltetrahydrofolate. The dehydrogenase ArnADH stretch occupies residues 314-660 (RRTRVLILGV…RTTVQEGDGA (347 aa)). Residues Asp347 and 368–369 (DI) contribute to the NAD(+) site. UDP-alpha-D-glucuronate contacts are provided by residues Ala393, Tyr398, and 432–433 (TS). Glu434 serves as the catalytic Proton acceptor; for decarboxylase activity. UDP-alpha-D-glucuronate-binding positions include Arg460, Asn492, 526–535 (KLMDGGAQKR), and Tyr613. The active-site Proton donor; for decarboxylase activity is the Arg619.

In the N-terminal section; belongs to the Fmt family. UDP-L-Ara4N formyltransferase subfamily. The protein in the C-terminal section; belongs to the NAD(P)-dependent epimerase/dehydratase family. UDP-glucuronic acid decarboxylase subfamily. As to quaternary structure, homohexamer, formed by a dimer of trimers.

It carries out the reaction UDP-alpha-D-glucuronate + NAD(+) = UDP-beta-L-threo-pentopyranos-4-ulose + CO2 + NADH. It catalyses the reaction UDP-4-amino-4-deoxy-beta-L-arabinose + (6R)-10-formyltetrahydrofolate = UDP-4-deoxy-4-formamido-beta-L-arabinose + (6S)-5,6,7,8-tetrahydrofolate + H(+). The protein operates within nucleotide-sugar biosynthesis; UDP-4-deoxy-4-formamido-beta-L-arabinose biosynthesis; UDP-4-deoxy-4-formamido-beta-L-arabinose from UDP-alpha-D-glucuronate: step 1/3. Its pathway is nucleotide-sugar biosynthesis; UDP-4-deoxy-4-formamido-beta-L-arabinose biosynthesis; UDP-4-deoxy-4-formamido-beta-L-arabinose from UDP-alpha-D-glucuronate: step 3/3. It functions in the pathway bacterial outer membrane biogenesis; lipopolysaccharide biosynthesis. Bifunctional enzyme that catalyzes the oxidative decarboxylation of UDP-glucuronic acid (UDP-GlcUA) to UDP-4-keto-arabinose (UDP-Ara4O) and the addition of a formyl group to UDP-4-amino-4-deoxy-L-arabinose (UDP-L-Ara4N) to form UDP-L-4-formamido-arabinose (UDP-L-Ara4FN). The modified arabinose is attached to lipid A and is required for resistance to polymyxin and cationic antimicrobial peptides. This is Bifunctional polymyxin resistance protein ArnA from Serratia proteamaculans (strain 568).